The following is a 128-amino-acid chain: NADPH-dependent 7-cyano-7-deazaguanine reductase (128 aa).

C34 acts as the Thioimide intermediate in catalysis. The active-site Proton donor is the D41. Substrate is bound by residues 56 to 58 (IEL) and 75 to 76 (HE).

It belongs to the GTP cyclohydrolase I family. QueF type 1 subfamily.

The protein resides in the cytoplasm. It carries out the reaction 7-aminomethyl-7-carbaguanine + 2 NADP(+) = 7-cyano-7-deazaguanine + 2 NADPH + 3 H(+). It functions in the pathway tRNA modification; tRNA-queuosine biosynthesis. Its function is as follows. Catalyzes the NADPH-dependent reduction of 7-cyano-7-deazaguanine (preQ0) to 7-aminomethyl-7-deazaguanine (preQ1). This is NADPH-dependent 7-cyano-7-deazaguanine reductase from Ruthia magnifica subsp. Calyptogena magnifica.